The sequence spans 245 residues: MEEAKSQSLEEDFEGQATHTGPKGVINDWRKFKLESEDSDSVPPSKKEILRQMSSPQSRDNKDSKERFSRKMSIQEYELIHRDKEDENCLRKYRRQCMQDMHQKLSFGPRYGFVYELETGEQFLETIEKEQKITTIVVHIYEDGIKGCDALNSSFTCLAVEYPMVKFCKIKASNTGARDRFSSDVLPTLLVYKGGELISNFISVSEQFAEEFFAGDVESFLNEYGLLPERETHALDQTNMEEDIE.

Positions 1-14 are enriched in acidic residues; sequence MEEAKSQSLEEDFE. The interval 1–68 is disordered; it reads MEEAKSQSLE…RDNKDSKERF (68 aa). The Phosducin domain occupies 1–241; sequence MEEAKSQSLE…THALDQTNME (241 aa). Residues 59–68 show a composition bias toward basic and acidic residues; sequence RDNKDSKERF. S73 carries the post-translational modification Phosphoserine; by PKA. A thioredoxin fold region spans residues 111–245; that stretch reads YGFVYELETG…DQTNMEEDIE (135 aa).

Belongs to the phosducin family. Interacts with CRX. Forms a complex with the beta and gamma subunits of the GTP-binding protein, transducin. Light-induced changes in cyclic nucleotide levels modulate the phosphorylation of this protein by cAMP kinase.

Its subcellular location is the cytoplasm. It is found in the cytosol. It localises to the nucleus. The protein localises to the cell projection. The protein resides in the cilium. Its subcellular location is the photoreceptor outer segment. It is found in the photoreceptor inner segment. Inhibits the transcriptional activation activity of the cone-rod homeobox CRX. May participate in the regulation of visual phototransduction or in the integration of photoreceptor metabolism. The protein is Phosducin (PDC) of Felis catus (Cat).